Reading from the N-terminus, the 800-residue chain is Transcription initiation factor TFIID subunit 5 (800 aa).

The disordered stretch occupies residues 1-74; the sequence is MAALAEEQTE…KPTVAVSAAA (74 aa). A compositionally biased stretch (gly residues) spans 30–50; that stretch reads DGAGEGSGGTTNNGPNGGGGN. Positions 92 to 124 constitute a LisH domain; sequence HDRQTLLAVLQFLRQSKLREAEEALRREAGLLE. The segment at 153–189 is disordered; that stretch reads ASAPGPAAPDPPGTGASGATVVSGSASGPAAPGKVGS. The segment covering 165-189 has biased composition (low complexity); the sequence is GTGASGATVVSGSASGPAAPGKVGS. Residues 194–340 form an NTD2; involved in homo-dimerization; also involved in TFIID-TFIIF contacts in the RNA Pol II pre-initiation complex (PIC) region; that stretch reads DQPDVSAVLS…NIVQEHLYID (147 aa). The span at 384–395 shows a compositional bias: acidic residues; it reads VPLDDEDEEGEN. A disordered region spans residues 384–438; the sequence is VPLDDEDEEGENEEGKPKKKKPKKDSIGSKSKKQDPNAPPQNRIPLPELKDSDKL. A compositionally biased stretch (basic and acidic residues) spans 407-418; it reads KDSIGSKSKKQD. WD repeat units lie at residues 468-507, 541-580, 583-624, 625-666, 667-706, and 709-748; these read NAYQ…LRSV, GHSG…CLVG, GHNY…RIFA, GHLA…RIFT, GHKG…MVGE, and GHTD…EDLE.

Belongs to the WD repeat TAF5 family. In terms of assembly, homodimer. Component of the TFIID basal transcription factor complex, composed of TATA-box-binding protein TBP, and a number of TBP-associated factors (TAFs), including TAF1, TAF2, TAF3, TAF4, TAF5, TAF6, TAF7, TAF8, TAF9, TAF10, TAF11, TAF12 and TAF13. The TFIID complex structure can be divided into 3 modules TFIID-A, TFIID-B, and TFIID-C. TAF5 forms the TFIID-A module together with TAF3 and TBP, and in TFIID-B with TAF8. Component of the TFTC-HAT complex, at least composed of TAF5L, TAF6L, TADA3L, SUPT3H/SPT3, TAF2, TAF4, TAF5, GCN5L2/GCN5, TAF10 and TRRAP. TBP is not part of the TFTC-HAT complex. Interacts strongly with the histone H4-related TAF6 and the histone H3-related TAF9, as well as a stable complex comprised of both TAF6 and TAF9. Apparently weaker interactions with TBP, TAF1, TAF11, and TAF12, but not TAF7, also have been observed. As to quaternary structure, (Microbial infection) Interacts with SV40 Large T antigen.

It is found in the nucleus. In terms of biological role, the TFIID basal transcription factor complex plays a major role in the initiation of RNA polymerase II (Pol II)-dependent transcription. TFIID recognizes and binds promoters with or without a TATA box via its subunit TBP, a TATA-box-binding protein, and promotes assembly of the pre-initiation complex (PIC). The TFIID complex consists of TBP and TBP-associated factors (TAFs), including TAF1, TAF2, TAF3, TAF4, TAF5, TAF6, TAF7, TAF8, TAF9, TAF10, TAF11, TAF12 and TAF13. The TFIID complex structure can be divided into 3 modules TFIID-A, TFIID-B, and TFIID-C. TAF5 is involved in two modules of TFIID, in TFIID-A together with TAF3 and TBP, and in TFIID-B with TAF8. Involved in contacts between TFIID and TFIIF in the PIC. The sequence is that of Transcription initiation factor TFIID subunit 5 (TAF5) from Homo sapiens (Human).